The sequence spans 266 residues: GATA zinc finger domain-containing protein 1 (266 aa).

The GATA-type zinc-finger motif lies at 9-33; sequence CSMCKTTSSSMWKKSPQGEILCHHC. Residues 59–72 are compositionally biased toward low complexity; that stretch reads TTTFATTSAGPSQS. The interval 59–112 is disordered; it reads TTTFATTSAGPSQSNGGGGGKQSKQEIHRRSARLRNTKYKSAPAAEKKVSTKGK. Lys259 participates in a covalent cross-link: Glycyl lysine isopeptide (Lys-Gly) (interchain with G-Cter in SUMO2).

Component of a chromatin complex, at least composed of KDM5A, GATAD1 and EMSY. In terms of tissue distribution, expressed in the eye (lens, ciliary body, retina, sclera and conjunctiva) at postnatal day 2 and 10. Not detected anywhere at postnatal day 14.

It is found in the nucleus. In terms of biological role, component of some chromatin complex recruited to chromatin sites methylated 'Lys-4' of histone H3 (H3K4me), with a preference for trimethylated form (H3K4me3). This is GATA zinc finger domain-containing protein 1 (Gatad1) from Mus musculus (Mouse).